A 503-amino-acid chain; its full sequence is Cytochrome P450 monooxygenase lnbC (503 aa).

Residues V14 to V34 traverse the membrane as a helical segment. N94 and N169 each carry an N-linked (GlcNAc...) asparagine glycan. C446 serves as a coordination point for heme.

Belongs to the cytochrome P450 family. Requires heme as cofactor.

Its subcellular location is the membrane. The protein operates within secondary metabolite biosynthesis. Its function is as follows. Cytochrome P450 monooxygenase; part of the lnb gene cluster that mediates the biosynthesis of diastereomeric piperazines. Lna and lnb clusters encode sets of enzymes that produce overlapping sets of previously undescribed metabolites such as piperazinomycin-like metabolites or morpholine. The lna and lnb biosynthetic pathways appear to be part of a signaling network that controls the formation of sclerotia, a resilient overwintering structure. One primary function of the non-canonical nonribosomal peptide synthetases lnaA and lnbA consists in the reduction of L-tyrosine. The presence in the clusters of tailoring enzymes such as the oxidoreductases lnaB, lnbB, lnaE or lnbE, as well as of the cytochrome P450 monooxygenases lnaC, lnaD, or lnbC, might explain formation of various diastereomeric piperazines. This Aspergillus flavus (strain ATCC 200026 / FGSC A1120 / IAM 13836 / NRRL 3357 / JCM 12722 / SRRC 167) protein is Cytochrome P450 monooxygenase lnbC.